The following is a 396-amino-acid chain: Acetate kinase (396 aa).

N7 is a Mg(2+) binding site. K14 is an ATP binding site. Residue R88 coordinates substrate. The active-site Proton donor/acceptor is the D145. ATP contacts are provided by residues 205–209 (HLGNG), 279–281 (DFR), and 327–331 (GIGEN). Position 381 (E381) interacts with Mg(2+).

Belongs to the acetokinase family. As to quaternary structure, homodimer. It depends on Mg(2+) as a cofactor. Mn(2+) serves as cofactor.

The protein resides in the cytoplasm. It carries out the reaction acetate + ATP = acetyl phosphate + ADP. Its pathway is metabolic intermediate biosynthesis; acetyl-CoA biosynthesis; acetyl-CoA from acetate: step 1/2. Catalyzes the formation of acetyl phosphate from acetate and ATP. Can also catalyze the reverse reaction. This is Acetate kinase from Campylobacter jejuni subsp. jejuni serotype O:2 (strain ATCC 700819 / NCTC 11168).